The chain runs to 138 residues: 1,4-dihydroxy-2-naphthoyl-CoA hydrolase (138 aa).

Asp-13 is an active-site residue.

This sequence belongs to the 4-hydroxybenzoyl-CoA thioesterase family. DHNA-CoA hydrolase subfamily.

It carries out the reaction 1,4-dihydroxy-2-naphthoyl-CoA + H2O = 1,4-dihydroxy-2-naphthoate + CoA + H(+). It participates in cofactor biosynthesis; phylloquinone biosynthesis. Its pathway is quinol/quinone metabolism; 1,4-dihydroxy-2-naphthoate biosynthesis; 1,4-dihydroxy-2-naphthoate from chorismate: step 7/7. Functionally, catalyzes the hydrolysis of 1,4-dihydroxy-2-naphthoyl-CoA (DHNA-CoA) to 1,4-dihydroxy-2-naphthoate (DHNA), a reaction involved in phylloquinone (vitamin K1) biosynthesis. This chain is 1,4-dihydroxy-2-naphthoyl-CoA hydrolase, found in Microcystis aeruginosa (strain NIES-843 / IAM M-2473).